The sequence spans 464 residues: Cysteine--tRNA ligase (464 aa).

Cysteine 29 contacts Zn(2+). The 'HIGH' region signature appears at 31 to 41; the sequence is ATVQGDPHIGH. Zn(2+) is bound by residues cysteine 207, histidine 232, and glutamate 236. Residues 263–267 carry the 'KMSKS' region motif; it reads KMSKS. Position 266 (lysine 266) interacts with ATP.

It belongs to the class-I aminoacyl-tRNA synthetase family. Monomer. It depends on Zn(2+) as a cofactor.

It is found in the cytoplasm. The enzyme catalyses tRNA(Cys) + L-cysteine + ATP = L-cysteinyl-tRNA(Cys) + AMP + diphosphate. This is Cysteine--tRNA ligase from Rhodococcus jostii (strain RHA1).